Here is a 531-residue protein sequence, read N- to C-terminus: Squalene epoxidase 1 (531 aa).

A helical transmembrane segment spans residues 9 to 29 (ILPLLISSLLISFVAFYGFFV). Residues 70-71 (VA), 90-91 (ER), arginine 98, arginine 169, valine 185, aspartate 347, and methionine 360 contribute to the FAD site. The next 2 helical transmembrane spans lie at 458–478 (LVCHFFAVAVYGVIRLLIPFP) and 483–503 (IWLGAKLISGASGIIFPIIKA).

Belongs to the squalene monooxygenase family. FAD is required as a cofactor. Expressed in seedlings, leaves, stems, inflorescences, sepals, style and siliques. Expressed in expanded cotyledons, root tips and cortical cells of the root elongation zone, but not in root hair cells. In leaves, expressed in most cells, with a very strong expression in stomata.

It localises to the membrane. The enzyme catalyses squalene + reduced [NADPH--hemoprotein reductase] + O2 = (S)-2,3-epoxysqualene + oxidized [NADPH--hemoprotein reductase] + H2O + H(+). Its pathway is terpene metabolism; lanosterol biosynthesis; lanosterol from farnesyl diphosphate: step 2/3. Catalyzes the stereospecific oxidation of squalene to (S)-2,3-epoxysqualene, and is considered to be a rate-limiting enzyme in steroid biosynthesis. Can produce not only oxidosqualene, but also 2,3:22,23-dioxidosqualene. Main squalene epoxidase in the root. Sqe1 mutants may show defects in membrane lipid rafts, impairing the correct localization of RHD2 NADPH oxidase and the proper polarized production of ROS. The chain is Squalene epoxidase 1 (SQE1) from Arabidopsis thaliana (Mouse-ear cress).